The following is a 501-amino-acid chain: ATP synthase subunit alpha (501 aa).

An ATP-binding site is contributed by 169–176 (GDRQTGKT).

The protein belongs to the ATPase alpha/beta chains family. As to quaternary structure, F-type ATPases have 2 components, CF(1) - the catalytic core - and CF(0) - the membrane proton channel. CF(1) has five subunits: alpha(3), beta(3), gamma(1), delta(1), epsilon(1). CF(0) has three main subunits: a(1), b(2) and c(9-12). The alpha and beta chains form an alternating ring which encloses part of the gamma chain. CF(1) is attached to CF(0) by a central stalk formed by the gamma and epsilon chains, while a peripheral stalk is formed by the delta and b chains.

The protein resides in the cell membrane. It catalyses the reaction ATP + H2O + 4 H(+)(in) = ADP + phosphate + 5 H(+)(out). Produces ATP from ADP in the presence of a proton gradient across the membrane. The alpha chain is a regulatory subunit. The chain is ATP synthase subunit alpha from Streptococcus gordonii (strain Challis / ATCC 35105 / BCRC 15272 / CH1 / DL1 / V288).